The following is a 95-amino-acid chain: Large ribosomal subunit protein bL27 (95 aa).

A propeptide spanning residues 1–10 (MRFILNLQFF) is cleaved from the precursor.

This sequence belongs to the bacterial ribosomal protein bL27 family. In terms of processing, the N-terminus is cleaved by ribosomal processing cysteine protease Prp.

The chain is Large ribosomal subunit protein bL27 from Mesoplasma florum (strain ATCC 33453 / NBRC 100688 / NCTC 11704 / L1) (Acholeplasma florum).